The sequence spans 670 residues: ATP-dependent RNA helicase DDX18 (670 aa).

Composition is skewed to polar residues over residues 31–42 (SNLTLSETQNGD) and 83–105 (VTKS…SSNS). The interval 31–169 (SNLTLSETQN…ESEVPSLPLG (139 aa)) is disordered. The span at 117–154 (MVNDAEPDTKKAKTENKGKSEEESAETTKETENNVEKP) shows a compositional bias: basic and acidic residues. Residues 179-207 (FASLCNLVNENTLKAIKEMGFTNMTEIQH) carry the Q motif motif. A Helicase ATP-binding domain is found at 210 to 385 (IRPLLEGRDL…RISLKKEPLY (176 aa)). 223-230 (AKTGSGKT) is a binding site for ATP. The short motif at 333-336 (DEAD) is the DEAD box element. The 171-residue stretch at 399–569 (GLEQGYVVCP…DIQSQLEKLI (171 aa)) folds into the Helicase C-terminal domain.

This sequence belongs to the DEAD box helicase family. DDX18/HAS1 subfamily. In terms of assembly, interacts with NOL8; the interaction is RNA-dependent. Interacts with PRC2 complex components EZH2, SUZ2 and JARID2; these interactions prevent deposition of the repressive H3K27me3 mark onto rDNA in pluripotent cells.

The protein localises to the nucleus. The protein resides in the nucleolus. It localises to the chromosome. The catalysed reaction is ATP + H2O = ADP + phosphate + H(+). ATP-dependent RNA helicase that plays a role in the regulation of R-loop homeostasis in both endogenous R-loop-prone regions and at sites of DNA damage. At endogenous loci such as actively transcribed genes, may act as a helicase to resolve the formation of R-loop during transcription and prevent the interference of R-loop with DNA-replication machinery. Also participates in the removal of DNA-lesion-associated R-loop. Plays an essential role for establishing pluripotency during embryogenesis and for pluripotency maintenance in embryonic stem cells. Mechanistically, prevents the polycomb repressive complex 2 (PRC2) from accessing rDNA loci and protects the active chromatin status in nucleolus. This chain is ATP-dependent RNA helicase DDX18 (DDX18), found in Homo sapiens (Human).